The primary structure comprises 320 residues: Homeobox-leucine zipper protein HOX25 (320 aa).

A DNA-binding region (homeobox) is located at residues 79-139 (AAARKRRLTA…NRRARWKTKQ (61 aa)). The segment at 138–182 (KQLELDFDRLRAAHDELLAGRTALAADNESLRSQVILLTEKLQAN) is leucine-zipper. Disordered regions lie at residues 181–209 (ANGK…KSFQ) and 249–282 (DSPE…PSSS). Residues 265 to 278 (SEDDCGGAGSDDDY) show a composition bias toward acidic residues.

It belongs to the HD-ZIP homeobox family. Class I subfamily. As to expression, expressed in roots, leaf sheaths and blades and panicles.

It is found in the nucleus. Probable transcription factor. This Oryza sativa subsp. japonica (Rice) protein is Homeobox-leucine zipper protein HOX25 (HOX25).